We begin with the raw amino-acid sequence, 338 residues long: MKLTFLGAGAWGTALASHAAAANDVVLWGRDPAQLAAIAATRENAAYLPGVTLSERLAVQADFEQAVAHAADDADGIVVVATPVAGLREMTRRLAARGARPVSMLWLCKGFESGTHLLPHQMVRAELDAAGRTEGFAYGVLTGPSFAREVALGLPCALTVAGNEPSLAERAQAAFHHHAMRIYGSDDLTGVEVGGAVKNVLAIATGASDGLGLGLNARAALVTRGLAEMTRLGLALGGRVETFMGLAGVGDLILTATGDLSRNRKVGQQLAAGQSLEQILAGLGHVAEGVRCAQAVAELASAYGVEMPIARAVCAVLFDGLSAADAVAQLLQRDARDE.

The NADPH site is built by W11, R30, and K109. K109, G143, and S145 together coordinate sn-glycerol 3-phosphate. A147 provides a ligand contact to NADPH. K198, D251, S261, R262, and N263 together coordinate sn-glycerol 3-phosphate. K198 acts as the Proton acceptor in catalysis. Residue R262 participates in NADPH binding. NADPH is bound by residues V286 and E288.

The protein belongs to the NAD-dependent glycerol-3-phosphate dehydrogenase family.

It localises to the cytoplasm. The catalysed reaction is sn-glycerol 3-phosphate + NAD(+) = dihydroxyacetone phosphate + NADH + H(+). It catalyses the reaction sn-glycerol 3-phosphate + NADP(+) = dihydroxyacetone phosphate + NADPH + H(+). It participates in membrane lipid metabolism; glycerophospholipid metabolism. Catalyzes the reduction of the glycolytic intermediate dihydroxyacetone phosphate (DHAP) to sn-glycerol 3-phosphate (G3P), the key precursor for phospholipid synthesis. The chain is Glycerol-3-phosphate dehydrogenase [NAD(P)+] from Cupriavidus necator (strain ATCC 17699 / DSM 428 / KCTC 22496 / NCIMB 10442 / H16 / Stanier 337) (Ralstonia eutropha).